Here is an 812-residue protein sequence, read N- to C-terminus: DNA translocase FtsK 1 (812 aa).

The segment covering Met-1–Lys-11 has biased composition (basic residues). Residues Met-1–Val-36 are disordered. Residues Lys-25–Val-36 are compositionally biased toward basic and acidic residues. 5 consecutive transmembrane segments (helical) span residues Ile-63–Ile-83, Val-116–Leu-136, Ile-156–Leu-176, Leu-184–Leu-204, and Leu-210–Leu-230. Over Glu-231–Leu-812 the chain is Cytoplasmic. In terms of domain architecture, FtsK spans Gly-461–Arg-670. Gly-481–Val-486 provides a ligand contact to ATP.

This sequence belongs to the FtsK/SpoIIIE/SftA family. Homohexamer. Forms a ring that surrounds DNA.

It is found in the cell inner membrane. In terms of biological role, essential cell division protein that coordinates cell division and chromosome segregation. The N-terminus is involved in assembly of the cell-division machinery. The C-terminus functions as a DNA motor that moves dsDNA in an ATP-dependent manner towards the dif recombination site, which is located within the replication terminus region. Translocation stops specifically at Xer-dif sites, where FtsK interacts with the Xer recombinase, allowing activation of chromosome unlinking by recombination. FtsK orienting polar sequences (KOPS) guide the direction of DNA translocation. FtsK can remove proteins from DNA as it translocates, but translocation stops specifically at XerCD-dif site, thereby preventing removal of XerC and XerD from dif. In Neisseria meningitidis serogroup A / serotype 4A (strain DSM 15465 / Z2491), this protein is DNA translocase FtsK 1 (ftsK1).